A 278-amino-acid polypeptide reads, in one-letter code: Large ribosomal subunit protein uL2 (278 aa).

Residues 201–278 (HGNINDGKAG…IMRSRHQRKK (78 aa)) are disordered. Residues 210 to 221 (GRSRWRGKRPHV) show a composition bias toward basic residues.

This sequence belongs to the universal ribosomal protein uL2 family. As to quaternary structure, part of the 50S ribosomal subunit. Forms a bridge to the 30S subunit in the 70S ribosome.

In terms of biological role, one of the primary rRNA binding proteins. Required for association of the 30S and 50S subunits to form the 70S ribosome, for tRNA binding and peptide bond formation. It has been suggested to have peptidyltransferase activity; this is somewhat controversial. Makes several contacts with the 16S rRNA in the 70S ribosome. The protein is Large ribosomal subunit protein uL2 of Sinorhizobium fredii (strain NBRC 101917 / NGR234).